Here is a 59-residue protein sequence, read N- to C-terminus: Putative potassium channel toxin Ts25 (59 aa).

The first 22 residues, 1–22, serve as a signal peptide directing secretion; it reads MKAFYGILIIFILISMIHLSQQ. Cystine bridges form between Cys-29/Cys-50, Cys-35/Cys-55, and Cys-39/Cys-57.

The protein belongs to the short scorpion toxin superfamily. Potassium channel inhibitor family. Alpha-KTx 04 subfamily. In terms of tissue distribution, expressed by the venom gland.

It is found in the secreted. Potently blocks Kv1.1/KCNA1 (85%), Kv1.2/KCNA2 (91%), Kv1.3/KCNA3 (89%), Kv1.6/KCNA6 (94%), and Shaker (97%). The protein is Putative potassium channel toxin Ts25 of Tityus serrulatus (Brazilian scorpion).